Consider the following 707-residue polypeptide: Elongation factor G (707 aa).

Positions 8–297 constitute a tr-type G domain; sequence ERVRNIGIAA…AVVDYLPSPV (290 aa). GTP is bound by residues 17-24, 96-100, and 150-153; these read AHIDAGKT, DTPGH, and NKMD.

It belongs to the TRAFAC class translation factor GTPase superfamily. Classic translation factor GTPase family. EF-G/EF-2 subfamily.

The protein resides in the cytoplasm. Functionally, catalyzes the GTP-dependent ribosomal translocation step during translation elongation. During this step, the ribosome changes from the pre-translocational (PRE) to the post-translocational (POST) state as the newly formed A-site-bound peptidyl-tRNA and P-site-bound deacylated tRNA move to the P and E sites, respectively. Catalyzes the coordinated movement of the two tRNA molecules, the mRNA and conformational changes in the ribosome. The polypeptide is Elongation factor G (Synechococcus sp. (strain JA-2-3B'a(2-13)) (Cyanobacteria bacterium Yellowstone B-Prime)).